The primary structure comprises 484 residues: Serine/threonine-protein kinase RIO1 (484 aa).

The Protein kinase domain occupies 76 to 402 (ADLNGCLSTG…EFDNADHECS (327 aa)). ATP is bound by residues Lys125 and Leu198. The active-site Proton acceptor is Asp244. Mg(2+) contacts are provided by Asn249 and Asp261. The active-site 4-aspartylphosphate intermediate is Asp261. The tract at residues 398 to 484 (DHECSSGTEE…KLVKKTKSKK (87 aa)) is disordered. Phosphoserine; by CK2 occurs at positions 402, 403, 409, 416, 417, and 419. The segment at 403–484 (SGTEEFSDDE…KLVKKTKSKK (82 aa)) is interaction with CKA2. Positions 407-434 (EFSDDEEDGSSGSEEDDEEEGEYYDDDE) are enriched in acidic residues. The interval 440 to 484 (GKKHEDKDLKKLRKQEAKDAKREKRKTKVKKHIKKKLVKKTKSKK) is association with (pre-)40S ribosomal subunit. Residues 442–461 (KHEDKDLKKLRKQEAKDAKR) are compositionally biased toward basic and acidic residues. A compositionally biased stretch (basic residues) spans 462 to 484 (EKRKTKVKKHIKKKLVKKTKSKK).

Belongs to the protein kinase superfamily. RIO-type Ser/Thr kinase family. As to quaternary structure, interacts with CKA2. Mg(2+) is required as a cofactor. Post-translationally, autophosphorylated. Phosphorylated by casein kinase II (CK2). Phosphorylation by CK2 stimulates RIO1 kinase activity and targets it for degradation at the G1/S transition of the cell cycle.

The protein localises to the cytoplasm. It carries out the reaction L-seryl-[protein] + ATP = O-phospho-L-seryl-[protein] + ADP + H(+). The catalysed reaction is L-threonyl-[protein] + ATP = O-phospho-L-threonyl-[protein] + ADP + H(+). It catalyses the reaction ATP + H2O = ADP + phosphate + H(+). Functionally, required for the final endonucleolytic cleavage at site D converting 20S pre-rRNA into the mature 18S rRNA. Required for the final steps of cytoplasmic maturation of the 40S ribosomal subunit. The association with the very late 40S subunit intermediate seems to follow RIO2 association with precursors of the 40S subunit and may involve a translation-like checkpoint point cycle preceeding the binding to the 60S ribosomal subunit. Despite the protein kinase domain is proposed to act predominantly as an ATPase. The catalytic activity regulates its dynamic association with the 40S subunit. Has a role in the cell cycle where it is required for entrance into S-phase and in the control of the onset of anaphase. Appears to also be involved in the maintenance of chromosome stability and correct mitotic segregation. The protein is Serine/threonine-protein kinase RIO1 (RIO1) of Saccharomyces cerevisiae (strain ATCC 204508 / S288c) (Baker's yeast).